We begin with the raw amino-acid sequence, 50 residues long: Ornatin-E (50 aa).

The Cell attachment site motif lies at 42–44 (RGD).

Belongs to the ornatin family.

It localises to the secreted. Functionally, potent inhibitor of fibrinogen interaction with platelet receptors expressed on glycoprotein IIb-IIIa complex. May prevent blood from clotting during either feeding and/or storage of ingested blood. The protein is Ornatin-E of Placobdella ornata (Turtle leech).